Consider the following 208-residue polypeptide: MAIYEVKHPLIQHKLGLLRKADLSTKQFRELASEVARLLTYEATKDLETESITINGWAGPVTVQQIKGKKITIVPILRAGLGMMNGVLDMIPSAKVSVVGLYRNEETLEPVAYYEKFTTDMEERTALIIDPMLATGGSLLATIEMLKATGCRRIKGLFLVAVPEGLEKISSAHPDVEIYVASIDERLNEHGYILPGLGDAGDKIFGTK.

5-phospho-alpha-D-ribose 1-diphosphate-binding positions include R78, R103, and 130–138; that span reads DPMLATGGS. Residues I193 and 198–200 contribute to the uracil site; that span reads GDA. D199 provides a ligand contact to 5-phospho-alpha-D-ribose 1-diphosphate.

The protein belongs to the UPRTase family. Requires Mg(2+) as cofactor.

It catalyses the reaction UMP + diphosphate = 5-phospho-alpha-D-ribose 1-diphosphate + uracil. The protein operates within pyrimidine metabolism; UMP biosynthesis via salvage pathway; UMP from uracil: step 1/1. With respect to regulation, allosterically activated by GTP. Functionally, catalyzes the conversion of uracil and 5-phospho-alpha-D-ribose 1-diphosphate (PRPP) to UMP and diphosphate. This Trichlorobacter lovleyi (strain ATCC BAA-1151 / DSM 17278 / SZ) (Geobacter lovleyi) protein is Uracil phosphoribosyltransferase.